The chain runs to 69 residues: Mu-conotoxin-like Am3.3 (69 aa).

The signal sequence occupies residues 1 to 20; that stretch reads MMSKLGVLLTICLLLFPLTA. A propeptide spanning residues 21 to 52 is cleaved from the precursor; that stretch reads VPLDGDQPADRPAERMQDDISSENHPMFDAIR. At Cys-68 the chain carries Cysteine amide.

This sequence belongs to the conotoxin M family. Post-translationally, is not hydroxylated. Contains 3 disulfide bonds. As to expression, expressed by the venom duct.

Its subcellular location is the secreted. Mu-conotoxins block voltage-gated sodium channels (Nav). This is Mu-conotoxin-like Am3.3 from Conus amadis (Amadis cone).